We begin with the raw amino-acid sequence, 576 residues long: Probable vesicular glutamate transporter eat-4 (576 aa).

Residues 1–69 are Cytoplasmic-facing; that stretch reads MSSWNEAWDR…QTWIGKCRKR (69 aa). The segment at 25 to 46 is disordered; sequence AAASATGAAPPQQMQEEGNENP. Residues 36 to 46 are compositionally biased toward polar residues; it reads QQMQEEGNENP. A helical membrane pass occupies residues 70–90; that stretch reads WLLAILANMGFMISFGIRCNF. At 91-121 the chain is on the extracellular side; it reads GAAKTHMYKNYTDPYGKVHMHEFNWTIDELS. N-linked (GlcNAc...) asparagine glycosylation is found at asparagine 100 and asparagine 114. The helical transmembrane segment at 122-142 threads the bilayer; that stretch reads VMESSYFYGYLVTQIPAGFLA. The Cytoplasmic portion of the chain corresponds to 143-150; that stretch reads AKFPPNKL. The helical transmembrane segment at 151–171 threads the bilayer; sequence FGFGIGVGAFLNILLPYGFKV. The Extracellular portion of the chain corresponds to 172-174; sequence KSD. A helical membrane pass occupies residues 175-195; sequence YLVAFIQITQGLVQGVCYPAM. Topologically, residues 196–213 are cytoplasmic; sequence HGVWRYWAPPMERSKLAT. A helical transmembrane segment spans residues 214 to 234; sequence TAFTGSYAGAVLGLPLSAFLV. The Extracellular portion of the chain corresponds to 235–239; sequence SYVSW. The helical transmembrane segment at 240 to 260 threads the bilayer; sequence AAPFYLYGVCGVIWAILWFCV. Residues 261–305 lie on the Cytoplasmic side of the membrane; that stretch reads TFEKPAFHPTISQEEKIFIEDAIGHVSNTHPTIRSIPWKAIVTSK. Residues 306-325 traverse the membrane as a helical segment; that stretch reads PVWAIIVANFARSWTFYLLL. At 326–344 the chain is on the extracellular side; that stretch reads QNQLTYMKEALGMKIADSG. Residues 345–365 form a helical membrane-spanning segment; sequence LLAAIPHLVMGCVVLMGGQLA. Residues 366–381 lie on the Cytoplasmic side of the membrane; the sequence is DYLRSNKILSTTAVRK. Residues 382–402 form a helical membrane-spanning segment; it reads IFNCGGFGGEAAFMLIVAYTT. Over 403-406 the chain is Extracellular; sequence SDTT. A helical membrane pass occupies residues 407–427; sequence AIMALIAAVGMSGFAISGFNV. Over 428–437 the chain is Cytoplasmic; that stretch reads NHLDIAPRYA. A helical transmembrane segment spans residues 438-458; it reads AILMGFSNGIGTLAGLTCPFV. Residues 459 to 471 lie on the Extracellular side of the membrane; that stretch reads TEAFTAHSKHGWT. The helical transmembrane segment at 472 to 492 threads the bilayer; sequence SVFLLASLIHFTGVTFYAVYA. Topologically, residues 493–576 are cytoplasmic; the sequence is SGELQEWAEP…VVENPHYQQW (84 aa).

This sequence belongs to the major facilitator superfamily. Sodium/anion cotransporter family. VGLUT subfamily. Expressed in neurons of the pharynx and the extrapharyngeal nervous system. Highly expressed in male PHC sensory neurons.

The protein localises to the cell membrane. It is found in the synapse. Required for glutamatergic synaptic transmission. In AWB and AWC sensory neurons, required for the detection of preferred food sources, probably via glutamatergic neurotransmission from sensory neurons. Negatively regulates the turning step of male mating behavior. The polypeptide is Probable vesicular glutamate transporter eat-4 (Caenorhabditis elegans).